The chain runs to 572 residues: MRLSIYSSILLLRAMCLVRPTFGFPATTCRCMPGDSCWPSSTDWAHFNASIGGRLIATQPLAQACHDPYYNETECQYLQKHWTLPALHDISPSSIMAAAVAKDTCDAFTPRSKPCAPGDMVVYSVNASSPDDFSRTIRFSQQRNIRLVIRNTGHDYLGKSTGAGALSIWTHYLKDIEFVNYTSSSYTGPAFTMAAGVQGSDIYNVANGRGLVVVGGECASVGPVGGYTQGGGHSALSSRFGLAADQVLEWQVVDGTGRLLTASPTQNPDLYWALSGGGGGTYGVVYSMTVKAFPDFPVTGVVLQFDTKNTSSKDFFQAVSYYHRDLPTYTAAGGMAIAQITRSSFLLTPLTLPNKTTEEARSLIAPFIHELETLHIPYQLNITQSATYLEHYKKLIEPNPTQLVQNGQYGGRLLPLNVIESNNTQLTEAVKTITQDGVVFVGIGLNVSSSVVGDVWNSVLPAWRTAALSVLLSTDWPAGANRSTMKTLADRMTSKWVPILTALSPDSGCYMNEADPQQPDWPQTFYGRNYETLYAIKKRYDPFDTFYASTAVGSGDWQVKTDGRLCRVKGNT.

Residues 1–23 (MRLSIYSSILLLRAMCLVRPTFG) form the signal peptide. Residues Asn48, Asn71, Asn126, Asn180, Asn309, Asn354, Asn381, Asn422, Asn446, and Asn481 are each glycosylated (N-linked (GlcNAc...) asparagine). In terms of domain architecture, FAD-binding PCMH-type spans 115 to 295 (CAPGDMVVYS…YSMTVKAFPD (181 aa)).

This sequence belongs to the oxygen-dependent FAD-linked oxidoreductase family. The cofactor is FAD.

It is found in the vacuole lumen. It functions in the pathway mycotoxin biosynthesis; patulin biosynthesis. In terms of biological role, FAD-linked oxidoreductase; part of the gene cluster that mediates the biosynthesis of patulin, an acetate-derived tetraketide mycotoxin produced by several fungal species that shows antimicrobial properties against several bacteria. PatO acts with patJ in the vacuole to convert gentisyl alcohol to isoepoxydon. The pathway begins with the synthesis of 6-methylsalicylic acid by the polyketide synthase (PKS) patK via condensation of acetate and malonate units. The 6-methylsalicylic acid decarboxylase patG then catalyzes the decarboxylation of 6-methylsalicylic acid to yield m-cresol (also known as 3-methylphenol). These first reactions occur in the cytosol. The intermediate m-cresol is then transported into the endoplasmic reticulum where the cytochrome P450 monooxygenase patH converts it to m-hydroxybenzyl alcohol, which is further converted to gentisyl alcohol by the cytochrome P450 monooxygenase patI. The oxidoreductases patJ and patO further convert gentisyl alcohol to isoepoxydon in the vacuole. PatN catalyzes then the transformation of isoepoxydon into phyllostine. The cluster protein patF is responsible for the conversion from phyllostine to neopatulin whereas the alcohol dehydrogenase patD converts neopatulin to E-ascladiol. The steps between isoepoxydon and E-ascladiol occur in the cytosol, and E-ascladiol is probably secreted to the extracellular space by one of the cluster-specific transporters patC or patM. Finally, the secreted patulin synthase patE catalyzes the conversion of E-ascladiol to patulin. The chain is FAD-linked oxidoreductase patO from Aspergillus clavatus (strain ATCC 1007 / CBS 513.65 / DSM 816 / NCTC 3887 / NRRL 1 / QM 1276 / 107).